A 419-amino-acid polypeptide reads, in one-letter code: DNA ligase (419 aa).

The interval 1 to 120 (MLNQFPGQYS…ARQKRGAHTN (120 aa)) is NTD. The interval 121-317 (RGMIPPMLVK…NYHSAHLAKL (197 aa)) is AD domain. Gln149, Lys151, Glu203, and Phe232 together coordinate ATP. Lys151 functions as the N6-AMP-lysine intermediate in the catalytic mechanism. An a divalent metal cation-binding site is contributed by Glu203. Glu291 is an a divalent metal cation binding site. The ATP site is built by Ile294 and Lys316. Residues 318 to 419 (KPLLDAEFIL…REPINVLEII (102 aa)) are OB domain.

The protein belongs to the ATP-dependent DNA ligase family. Requires a divalent metal cation as cofactor.

Its subcellular location is the virion. The enzyme catalyses ATP + (deoxyribonucleotide)n-3'-hydroxyl + 5'-phospho-(deoxyribonucleotide)m = (deoxyribonucleotide)n+m + AMP + diphosphate.. Very low-fidelity DNA ligase that seals nicks in double-stranded DNA during DNA repair. Together with the viral repair DNA polymerase X, fills the single nucleotide gaps generated by the AP endonuclease. It is not essential for viral replication and recombination. Displays a very low adenylation activity towards DNA with 3'-dideoxy- or 3'-amino-terminated nicks compared to regular nick DNA. The protein is DNA ligase (LIG) of Ornithodoros (relapsing fever ticks).